The chain runs to 233 residues: 7-cyano-7-deazaguanine synthase (233 aa).

Residue 11 to 21 (LSGGLDSSTVL) participates in ATP binding. 4 residues coordinate Zn(2+): Cys195, Cys203, Cys206, and Cys209.

Belongs to the QueC family. The cofactor is Zn(2+).

The enzyme catalyses 7-carboxy-7-deazaguanine + NH4(+) + ATP = 7-cyano-7-deazaguanine + ADP + phosphate + H2O + H(+). The protein operates within purine metabolism; 7-cyano-7-deazaguanine biosynthesis. Functionally, catalyzes the ATP-dependent conversion of 7-carboxy-7-deazaguanine (CDG) to 7-cyano-7-deazaguanine (preQ(0)). The sequence is that of 7-cyano-7-deazaguanine synthase from Thermosynechococcus vestitus (strain NIES-2133 / IAM M-273 / BP-1).